The chain runs to 264 residues: Somatomedin-B and thrombospondin type-1 domain-containing protein (264 aa).

The first 20 residues, 1-20 (MKTLWMVLCALARLWPGALA), serve as a signal peptide directing secretion. Positions 24 to 75 (EAGRCCPGRDPACFARGWRLDRVYGTCFCDQACRLTGDCCFDYDRACPARPC) constitute an SMB domain. Intrachain disulfides connect Cys-28-Cys-36, Cys-28-Cys-52, Cys-36-Cys-70, Cys-50-Cys-52, Cys-50-Cys-63, Cys-56-Cys-62, and Cys-63-Cys-70. Residues 74–125 (PCFVGEWSPWSGCAGQCQPTTRVRRRSVRQEPLNGGAPCPPLEERAGCLEYS) enclose the TSP type-1 domain. Asn-227 carries an N-linked (GlcNAc...) asparagine glycan.

Belongs to the thrombospondin family.

It localises to the secreted. The protein resides in the extracellular space. The protein localises to the extracellular matrix. In Mus musculus (Mouse), this protein is Somatomedin-B and thrombospondin type-1 domain-containing protein (Sbspon).